The chain runs to 184 residues: Dual-action ribosomal maturation protein DarP (184 aa).

Residues 1 to 21 (MYKHPDEEWLDEIPGQQENED) are disordered.

The protein belongs to the DarP family.

It is found in the cytoplasm. Member of a network of 50S ribosomal subunit biogenesis factors which assembles along the 30S-50S interface, preventing incorrect 23S rRNA structures from forming. Promotes peptidyl transferase center (PTC) maturation. This Edwardsiella ictaluri (strain 93-146) protein is Dual-action ribosomal maturation protein DarP.